The primary structure comprises 61 residues: Antimicrobial peptide 1 (61 aa).

The N-terminal stretch at 1-24 (LPVAFLKFAIVLILFIAMSAMIEA) is a signal peptide. At Gln25 the chain carries Pyrrolidone carboxylic acid. 3 disulfides stabilise this stretch: Cys26–Cys43, Cys33–Cys47, and Cys42–Cys58.

It belongs to the AMP family. Homodimer. Post-translationally, three disulfide bonds are present. As to expression, found only in seeds.

It localises to the secreted. Its function is as follows. Possesses antifungal activity and is also active on two tested Gram-positive bacteria but is non-toxic for Gram-negative bacteria and cultured human cells. The polypeptide is Antimicrobial peptide 1 (AMP1) (Mirabilis jalapa (Garden four-o'clock)).